Consider the following 545-residue polypeptide: MASKEINFSDSARNKLYEGIKQLSDAVKVTMGPKGRNVLIQKSYGAPTITKDGVSVAKEIELADPIANMGAQLVKEVASKTADAAGDGTTTATVLAYSIYKEGLRNITAGANPIEVKRGMDKASAAIIEELKKSSKKIGGKSDIAQVATISANSDENIGALIAEAMEKVGKDGVITVEEAKGINDELSVVEGMQFDRGYLSAYFVTNTDKMTAQLENAYVLLTDKKISNMKEILPLLEATMQSGKPLLIIAEDIEGEALTTLVVNKLRGVLNVSAVKAPGFGDRRKAMLQDIAILTGGQVISEELGKTLEAATLADLGSAARIVIDKDNTTIVDGKGKTKDVKDRIAQIKTEIENTTSDYDREKLQERLAKLSGGVAVIKVGAASEVEMKEKKDRVDDALSATKAAVDEGIVIGGGSALIRASQKVKLKLEGDEAIGYDIIKRAIKAPLAQIATNAGYDAGVVVNEVEKNSKDGFGFNATTGEYVDMFKEGIIDPLKVTRVALQNAVSVSSLLLTTEATINEIKEDKPAPAMPDMGGMGGMGGMM.

ATP-binding positions include 30 to 33, lysine 51, 87 to 91, glycine 415, and aspartate 494; these read TMGP and DGTTT.

This sequence belongs to the chaperonin (HSP60) family. Forms a cylinder of 14 subunits composed of two heptameric rings stacked back-to-back. Interacts with the co-chaperonin GroES.

Its subcellular location is the cytoplasm. The enzyme catalyses ATP + H2O + a folded polypeptide = ADP + phosphate + an unfolded polypeptide.. Its function is as follows. Together with its co-chaperonin GroES, plays an essential role in assisting protein folding. The GroEL-GroES system forms a nano-cage that allows encapsulation of the non-native substrate proteins and provides a physical environment optimized to promote and accelerate protein folding. This Helicobacter hepaticus (strain ATCC 51449 / 3B1) protein is Chaperonin GroEL.